We begin with the raw amino-acid sequence, 382 residues long: Protein delta homolog 2 (382 aa).

The N-terminal stretch at Met-1–Ala-26 is a signal peptide. 4 EGF-like domains span residues Asp-27–Glu-58, Arg-62–Asp-89, Asp-91–Glu-129, and Lys-131–Glu-172. Topologically, residues Asp-27–Ser-305 are extracellular. Intrachain disulfides connect Cys-29/Cys-40, Cys-33/Cys-46, Cys-48/Cys-57, Cys-66/Cys-71, Cys-79/Cys-88, Cys-95/Cys-107, Cys-101/Cys-117, Cys-119/Cys-128, Cys-135/Cys-148, Cys-142/Cys-160, Cys-162/Cys-171, Cys-178/Cys-189, Cys-183/Cys-198, Cys-200/Cys-209, Cys-216/Cys-227, Cys-221/Cys-236, and Cys-238/Cys-247. N-linked (GlcNAc...) asparagine glycosylation occurs at Asn-157. The EGF-like 5; calcium-binding domain occupies Asn-174–Thr-210. The EGF-like 6; calcium-binding domain maps to Asn-212–Glu-248. The helical transmembrane segment at Leu-306 to Leu-326 threads the bilayer. Over Thr-327–Leu-382 the chain is Cytoplasmic.

It localises to the membrane. In terms of biological role, regulates adipogenesis. This Rattus norvegicus (Rat) protein is Protein delta homolog 2 (Dlk2).